The following is a 273-amino-acid chain: Dermonecrotic toxin LamSicTox-alphaIC1 (273 aa).

His5 is a catalytic residue. Glu25 and Asp27 together coordinate Mg(2+). His41 acts as the Nucleophile in catalysis. 2 disulfide bridges follow: Cys45–Cys51 and Cys47–Cys190. Asp85 contacts Mg(2+).

The protein belongs to the arthropod phospholipase D family. Class II subfamily. It depends on Mg(2+) as a cofactor. As to expression, expressed by the venom gland.

It localises to the secreted. It carries out the reaction an N-(acyl)-sphingosylphosphocholine = an N-(acyl)-sphingosyl-1,3-cyclic phosphate + choline. The catalysed reaction is an N-(acyl)-sphingosylphosphoethanolamine = an N-(acyl)-sphingosyl-1,3-cyclic phosphate + ethanolamine. It catalyses the reaction a 1-acyl-sn-glycero-3-phosphocholine = a 1-acyl-sn-glycero-2,3-cyclic phosphate + choline. The enzyme catalyses a 1-acyl-sn-glycero-3-phosphoethanolamine = a 1-acyl-sn-glycero-2,3-cyclic phosphate + ethanolamine. Functionally, dermonecrotic toxins cleave the phosphodiester linkage between the phosphate and headgroup of certain phospholipids (sphingolipid and lysolipid substrates), forming an alcohol (often choline) and a cyclic phosphate. This toxin acts on sphingomyelin (SM). It may also act on ceramide phosphoethanolamine (CPE), lysophosphatidylcholine (LPC) and lysophosphatidylethanolamine (LPE), but not on lysophosphatidylserine (LPS), and lysophosphatidylglycerol (LPG). It acts by transphosphatidylation, releasing exclusively cyclic phosphate products as second products. Induces dermonecrosis, hemolysis, increased vascular permeability, edema, inflammatory response, and platelet aggregation. The polypeptide is Dermonecrotic toxin LamSicTox-alphaIC1 (Loxosceles amazonica (Recluse spider)).